Consider the following 258-residue polypeptide: Venom plasminogen activator GPV-PA (258 aa).

The signal sequence occupies residues 1 to 18 (MVLIRVLANLLILQLSYA). A propeptide spanning residues 19–24 (QKSSEL) is cleaved from the precursor. The 225-residue stretch at 25–249 (VFGGRPCNIN…YTDWIQSIIA (225 aa)) folds into the Peptidase S1 domain. Intrachain disulfides connect C31-C163, C50-C66, C98-C256, C142-C210, C174-C189, and C200-C225. N44 carries N-linked (GlcNAc...) asparagine glycosylation. Catalysis depends on charge relay system residues H65 and D110. N121 and N185 each carry an N-linked (GlcNAc...) asparagine glycan. Catalysis depends on S204, which acts as the Charge relay system.

This sequence belongs to the peptidase S1 family. Snake venom subfamily. Monomer. In terms of tissue distribution, expressed by the venom gland.

Its subcellular location is the secreted. Snake venom serine protease that activates plasminogen. The sequence is that of Venom plasminogen activator GPV-PA from Trimeresurus albolabris (White-lipped pit viper).